Consider the following 144-residue polypeptide: Small ribosomal subunit protein uS9 (144 aa).

Residue Thr2 is modified to N-acetylthreonine. The tract at residues 124-144 is disordered; it reads RRESKKFGGPGARARYQKSYR.

The protein belongs to the universal ribosomal protein uS9 family.

In Caenorhabditis elegans, this protein is Small ribosomal subunit protein uS9 (rps-16).